Reading from the N-terminus, the 458-residue chain is ATP-dependent protease ATPase subunit HslU (458 aa).

ATP-binding positions include Val-18, 60–65 (GVGKTE), Asp-270, Glu-335, and Arg-407.

It belongs to the ClpX chaperone family. HslU subfamily. As to quaternary structure, a double ring-shaped homohexamer of HslV is capped on each side by a ring-shaped HslU homohexamer. The assembly of the HslU/HslV complex is dependent on binding of ATP.

The protein resides in the cytoplasm. In terms of biological role, ATPase subunit of a proteasome-like degradation complex; this subunit has chaperone activity. The binding of ATP and its subsequent hydrolysis by HslU are essential for unfolding of protein substrates subsequently hydrolyzed by HslV. HslU recognizes the N-terminal part of its protein substrates and unfolds these before they are guided to HslV for hydrolysis. The polypeptide is ATP-dependent protease ATPase subunit HslU (Desulfitobacterium hafniense (strain DSM 10664 / DCB-2)).